The chain runs to 177 residues: Large ribosomal subunit protein uL6 (177 aa).

Basic and acidic residues predominate over residues 152 to 171 (RPPEPYKGKGVRYDDEEVRR). A disordered region spans residues 152–177 (RPPEPYKGKGVRYDDEEVRRKEAKKK).

It belongs to the universal ribosomal protein uL6 family. Part of the 50S ribosomal subunit.

Functionally, this protein binds to the 23S rRNA, and is important in its secondary structure. It is located near the subunit interface in the base of the L7/L12 stalk, and near the tRNA binding site of the peptidyltransferase center. This is Large ribosomal subunit protein uL6 from Shewanella oneidensis (strain ATCC 700550 / JCM 31522 / CIP 106686 / LMG 19005 / NCIMB 14063 / MR-1).